Reading from the N-terminus, the 364-residue chain is Transposase for insertion sequence element IS1111A (364 aa).

The protein belongs to the transposase IS1111A/IS1328/IS1533 family.

Required for the transposition of the insertion element. This is Transposase for insertion sequence element IS1111A from Coxiella burnetii (strain RSA 493 / Nine Mile phase I).